A 202-amino-acid chain; its full sequence is uncharacterized protein (202 aa).

This is an uncharacterized protein from Archaeoglobus fulgidus (strain ATCC 49558 / DSM 4304 / JCM 9628 / NBRC 100126 / VC-16).